The sequence spans 442 residues: Syndecan-3 (442 aa).

2 disordered regions span residues 1–24 (MKPG…AAAG) and 57–87 (RPVD…SGYF). Topologically, residues 1–387 (MKPGPPHRAG…SILERKEVLV (387 aa)) are extracellular. Over residues 13–24 (HGAGAGAGAAAG) the composition is skewed to gly residues. Over residues 63 to 77 (GSGDDDSFPDDELDD) the composition is skewed to acidic residues. O-linked (Xyl...) (glycosaminoglycan) serine glycans are attached at residues S80, S82, S84, and S91. S108 carries an O-linked (GalNAc) serine; by GALNT13 glycan. O-linked (GalNAc) threonine; by GALNT13 glycans are attached at residues T109 and T110. Disordered stretches follow at residues 150–173 (EEPS…STGD), 225–326 (TTPE…ETTQ), and 340–367 (AAKA…AIDS). Low complexity-rich tracts occupy residues 156 to 173 (ATTV…STGD), 225 to 238 (TTPE…TAAV), and 275 to 286 (TLPLGTTAPGPT). S160 carries an O-linked (GalNAc) serine; by GALNT13 glycan. T161, T162, and T169 each carry an O-linked (GalNAc) threonine; by GALNT13 glycan. An O-linked (GalNAc) serine; by GALNT13 glycan is attached at S170. T171 carries O-linked (GalNAc) threonine; by GALNT13 glycosylation. Polar residues predominate over residues 288 to 299 (VAQTPTPETFLT). O-linked (Xyl...) (glycosaminoglycan) serine glycans are attached at residues S314 and S367. A helical transmembrane segment spans residues 388–408 (AVIVGGVVGALFAAFLVTLLI). Phosphotyrosine occurs at positions 409, 419, 431, and 441. Topologically, residues 409-442 (YRMKKKDEGSYTLEEPKQASVTYQKPDKQEEFYA) are cytoplasmic. Positions 419 to 442 (YTLEEPKQASVTYQKPDKQEEFYA) are disordered. Positions 433-442 (KPDKQEEFYA) are enriched in basic and acidic residues.

The protein belongs to the syndecan proteoglycan family. Interacts with TIAM1. Interacts with PTN (via heparan sulfate chains); this interaction mediates the neurite outgrowth-promoting signal from PTN to the cytoskeleton of growing neurites; this interaction mediates osteoblast recruitment. Interacts with MDK; this interaction induces SDC3 clustering; this interaction induces neuronal cell adhesion and neurite outgrowth. In terms of processing, O-glycosylated within the Thr/Ser-rich region which could interact with lectin domains on other molecules. In terms of tissue distribution, expressed in the nervous system, the adrenal gland, and the spleen.

The protein localises to the cell membrane. Functionally, cell surface proteoglycan that may bear heparan sulfate. May have a role in the organization of cell shape by affecting the actin cytoskeleton, possibly by transferring signals from the cell surface in a sugar-dependent mechanism. This is Syndecan-3 (SDC3) from Homo sapiens (Human).